Consider the following 337-residue polypeptide: Anthranilate phosphoribosyltransferase (337 aa).

5-phospho-alpha-D-ribose 1-diphosphate contacts are provided by residues Gly81, 84–85, Ser89, 91–94, 109–117, and Ala121; these read GD, NVST, and KHGNRAMSS. Gly81 contacts anthranilate. Ser93 is a Mg(2+) binding site. Asn112 is a binding site for anthranilate. Arg167 lines the anthranilate pocket. Mg(2+)-binding residues include Asp226 and Glu227.

The protein belongs to the anthranilate phosphoribosyltransferase family. Homodimer. Mg(2+) is required as a cofactor.

The enzyme catalyses N-(5-phospho-beta-D-ribosyl)anthranilate + diphosphate = 5-phospho-alpha-D-ribose 1-diphosphate + anthranilate. Its pathway is amino-acid biosynthesis; L-tryptophan biosynthesis; L-tryptophan from chorismate: step 2/5. In terms of biological role, catalyzes the transfer of the phosphoribosyl group of 5-phosphorylribose-1-pyrophosphate (PRPP) to anthranilate to yield N-(5'-phosphoribosyl)-anthranilate (PRA). The protein is Anthranilate phosphoribosyltransferase of Afipia carboxidovorans (strain ATCC 49405 / DSM 1227 / KCTC 32145 / OM5) (Oligotropha carboxidovorans).